Consider the following 505-residue polypeptide: RNA-splicing ligase RtcB homolog (505 aa).

Positions 119, 122, 227, 259, and 353 each coordinate Mn(2+). GMP is bound at residue 226–230 (NHYAE). GMP contacts are provided by residues 353–354 (HN), 402–405 (GGTM), S409, 428–431 (HGAG), and K504. H428 acts as the GMP-histidine intermediate in catalysis.

This sequence belongs to the RtcB family. As to quaternary structure, catalytic component of the tRNA-splicing ligase complex. The cofactor is Mn(2+).

Its subcellular location is the nucleus. It is found in the cytoplasm. It carries out the reaction a 3'-end 3'-phospho-ribonucleotide-RNA + a 5'-end dephospho-ribonucleoside-RNA + GTP = a ribonucleotidyl-ribonucleotide-RNA + GMP + diphosphate. The enzyme catalyses a 3'-end 2',3'-cyclophospho-ribonucleotide-RNA + a 5'-end dephospho-ribonucleoside-RNA + GTP + H2O = a ribonucleotidyl-ribonucleotide-RNA + GMP + diphosphate + H(+). In terms of biological role, catalytic subunit of the tRNA-splicing ligase complex that acts by directly joining spliced tRNA halves to mature-sized tRNAs by incorporating the precursor-derived splice junction phosphate into the mature tRNA as a canonical 3',5'-phosphodiester. May act as an RNA ligase with broad substrate specificity, and may function toward other RNAs. This is RNA-splicing ligase RtcB homolog from Xenopus tropicalis (Western clawed frog).